The sequence spans 251 residues: uncharacterized protein (251 aa).

Belongs to the FAM243 family.

This is an uncharacterized protein from Homo sapiens (Human).